The primary structure comprises 793 residues: MRIGVYVCHCGLNIAGVIDVSALEEMAGELEDVVLAREVQFLCSDSGQEGIIKDIKDNKIDRVVIAACSPRLHEKTFRHVMEKADLNPYLMEMVNIREQCSWVHADDPQMATQKAFDLIRMGVAKARFLRELSATSSKASRNVLIIGGGVAGIEAALNLAEAGFPVTMVERESTIGGKMALMNEVFPTNDCSICVLAPKMTEVQNHPNITLYTYSEVTDISGSVGKFHVRVTRKPRFVLEDKCKGCVDLCSEVCPVEIENPMNYGIGKSRAIYMPIPQSVPQVVLIDPDHCVGCGLCQLACPAEAVDYEQKPEEIEFEAGAVIVSTGYQLFDASRKKEYGFGKYPDVITNMQLERMLNSAGPTGGRVLVPSTGQPPESVAFIQCVGSRDKTVGNEHCSRVCCMAALKNSQMVKERYPGTDITIHYIDIRAAGEMYEEYYARTQGMGVDFIRGKVAEVYAGEDGRPVVRYENTLESRVEEEAHDLVVLSTGYEPSKAAEGIGRMLNLARRPDRFFASAHPKMRPVDAPVSGVFLAGCASGPKEIQVSIAQGSACASKVMQLLGTGELEADPMGAHVDPDKCIGCRTCVEVCKFGKISIVDKKAVVDEVSCYGCGDCSAACPVGAIQMRNFENEQILAQVRAATAHKSQCPFVVAFLCNWCSYACADLTGMSRIHYPTNIRVIRTMCSARINPEFVLEALKGGADGVLVAGCRMDECHYIHGNFDAKKRMDVLKEIIKEIGLDPKRLRTLWISAAEGERFSNTITEFVKELEEIGPIGSELKREYTATGLEEVAK.

147 to 170 (GGGVAGIEAALNLAEAGFPVTMVE) contributes to the FAD binding site. 4 4Fe-4S ferredoxin-type domains span residues 233–264 (RKPRFVLEDKCKGCVDLCSEVCPVEIENPMNY), 282–311 (QVVLIDPDHCVGCGLCQLACPAEAVDYEQK), 571–600 (MGAHVDPDKCIGCRTCVEVCKFGKISIVDK), and 601–629 (KAVVDEVSCYGCGDCSAACPVGAIQMRNF). Residues C243, C246, C250, C254, C291, C294, C297, C301, C580, C583, C586, C590, C609, C612, C615, and C619 each coordinate [4Fe-4S] cluster.

It belongs to the HdrA family. As to quaternary structure, the ferredoxin:CoB-CoM heterodisulfide reductase is composed of three subunits; HdrA, HdrB and HdrC. The cofactor is [4Fe-4S] cluster. FAD is required as a cofactor.

The protein resides in the cytoplasm. It carries out the reaction coenzyme B + coenzyme M + 2 oxidized [2Fe-2S]-[ferredoxin] = coenzyme M-coenzyme B heterodisulfide + 2 reduced [2Fe-2S]-[ferredoxin] + 2 H(+). It functions in the pathway cofactor metabolism; coenzyme M-coenzyme B heterodisulfide reduction; coenzyme B and coenzyme M from coenzyme M-coenzyme B heterodisulfide: step 1/1. In terms of biological role, part of a complex that catalyzes the reversible reduction of CoM-S-S-CoB to the thiol-coenzymes H-S-CoM (coenzyme M) and H-S-CoB (coenzyme B). The chain is Ferredoxin:CoB-CoM heterodisulfide reductase subunit A (hdrA) from Methanosarcina mazei (strain ATCC BAA-159 / DSM 3647 / Goe1 / Go1 / JCM 11833 / OCM 88) (Methanosarcina frisia).